The sequence spans 276 residues: Adenylate kinase (276 aa).

Residue 51–56 participates in ATP binding; that stretch reads GAGKGT. Residues 71 to 100 form an NMP region; sequence ATGDMLRSQVAKKTPLGQAAKKIMDAGGLV. AMP is bound by residues threonine 72, arginine 77, 98–100, 127–130, and glutamine 134; these read GLV and GFPR. An LID region spans residues 168 to 205; that stretch reads GRLVHPASGRSYHVKFNPPKKEMTDDITGEPLIQRSDD. Residues arginine 169 and 178–179 each bind ATP; that span reads SY. AMP contacts are provided by arginine 202 and arginine 213. An ATP-binding site is contributed by glutamine 241.

Belongs to the adenylate kinase family. AK2 subfamily. Monomer.

The protein resides in the cytoplasm. Its subcellular location is the cytosol. It is found in the mitochondrion intermembrane space. The catalysed reaction is AMP + ATP = 2 ADP. In terms of biological role, catalyzes the reversible transfer of the terminal phosphate group between ATP and AMP. Plays an important role in cellular energy homeostasis and in adenine nucleotide metabolism. Adenylate kinase activity is critical for regulation of the phosphate utilization and the AMP de novo biosynthesis pathways. The chain is Adenylate kinase from Podospora anserina (strain S / ATCC MYA-4624 / DSM 980 / FGSC 10383) (Pleurage anserina).